Consider the following 426-residue polypeptide: Tyrosine--tRNA ligase (426 aa).

Tyrosine 36 lines the L-tyrosine pocket. The short motif at 41-50 (PTAPSLHVGH) is the 'HIGH' region element. The L-tyrosine site is built by tyrosine 174 and glutamine 178. Positions 234-238 (KLGKS) match the 'KMSKS' region motif. Lysine 237 is an ATP binding site. The S4 RNA-binding domain occupies 359 to 416 (DGIVDLLVASGLSPSRGAARRTIDEGGVLVNNIRIQSEEWTPRTSDFLHGRWLVLRRG).

Belongs to the class-I aminoacyl-tRNA synthetase family. TyrS type 1 subfamily. In terms of assembly, homodimer.

The protein resides in the cytoplasm. The catalysed reaction is tRNA(Tyr) + L-tyrosine + ATP = L-tyrosyl-tRNA(Tyr) + AMP + diphosphate + H(+). In terms of biological role, catalyzes the attachment of tyrosine to tRNA(Tyr) in a two-step reaction: tyrosine is first activated by ATP to form Tyr-AMP and then transferred to the acceptor end of tRNA(Tyr). The protein is Tyrosine--tRNA ligase of Mycobacterium leprae (strain TN).